Reading from the N-terminus, the 92-residue chain is Small ribosomal subunit protein bS20 (92 aa).

A disordered region spans residues 1 to 23 (MANSPSAKKRAKQAEKRRSHNAS). A compositionally biased stretch (basic residues) spans 7–20 (AKKRAKQAEKRRSH).

This sequence belongs to the bacterial ribosomal protein bS20 family.

Its function is as follows. Binds directly to 16S ribosomal RNA. The protein is Small ribosomal subunit protein bS20 of Pseudomonas fluorescens (strain ATCC BAA-477 / NRRL B-23932 / Pf-5).